Reading from the N-terminus, the 305-residue chain is tRNA pseudouridine synthase B (305 aa).

D48 acts as the Nucleophile in catalysis.

It belongs to the pseudouridine synthase TruB family. Type 1 subfamily.

It carries out the reaction uridine(55) in tRNA = pseudouridine(55) in tRNA. Its function is as follows. Responsible for synthesis of pseudouridine from uracil-55 in the psi GC loop of transfer RNAs. The chain is tRNA pseudouridine synthase B from Pseudomonas syringae pv. syringae (strain B728a).